We begin with the raw amino-acid sequence, 264 residues long: tRNA pseudouridine synthase A (264 aa).

Residue Asp-56 is the Nucleophile of the active site. Tyr-114 is a substrate binding site.

The protein belongs to the tRNA pseudouridine synthase TruA family. Homodimer.

It catalyses the reaction uridine(38/39/40) in tRNA = pseudouridine(38/39/40) in tRNA. In terms of biological role, formation of pseudouridine at positions 38, 39 and 40 in the anticodon stem and loop of transfer RNAs. This is tRNA pseudouridine synthase A from Buchnera aphidicola subsp. Baizongia pistaciae (strain Bp).